The following is a 128-amino-acid chain: Small ribosomal subunit protein uS11 (128 aa).

It belongs to the universal ribosomal protein uS11 family. Part of the 30S ribosomal subunit. Interacts with proteins S7 and S18. Binds to IF-3.

Functionally, located on the platform of the 30S subunit, it bridges several disparate RNA helices of the 16S rRNA. Forms part of the Shine-Dalgarno cleft in the 70S ribosome. The protein is Small ribosomal subunit protein uS11 of Methylococcus capsulatus (strain ATCC 33009 / NCIMB 11132 / Bath).